A 434-amino-acid polypeptide reads, in one-letter code: UDP-N-acetylmuramoyl-L-alanyl-D-glutamate--2,6-diaminopimelate ligase (434 aa).

UDP-N-acetyl-alpha-D-muramoyl-L-alanyl-D-glutamate is bound at residue Ser-17. An ATP-binding site is contributed by 68 to 74 (GTNGKTT). Residues 111 to 112 (TT), Ser-138, Gln-144, and Arg-146 contribute to the UDP-N-acetyl-alpha-D-muramoyl-L-alanyl-D-glutamate site. N6-carboxylysine is present on Lys-178. Residues Arg-326, 350–353 (DNPR), Gly-401, and Glu-405 contribute to the meso-2,6-diaminopimelate site. The Meso-diaminopimelate recognition motif signature appears at 350 to 353 (DNPR).

Belongs to the MurCDEF family. MurE subfamily. Mg(2+) serves as cofactor. Carboxylation is probably crucial for Mg(2+) binding and, consequently, for the gamma-phosphate positioning of ATP.

Its subcellular location is the cytoplasm. The enzyme catalyses UDP-N-acetyl-alpha-D-muramoyl-L-alanyl-D-glutamate + meso-2,6-diaminopimelate + ATP = UDP-N-acetyl-alpha-D-muramoyl-L-alanyl-gamma-D-glutamyl-meso-2,6-diaminopimelate + ADP + phosphate + H(+). The protein operates within cell wall biogenesis; peptidoglycan biosynthesis. Its function is as follows. Catalyzes the addition of meso-diaminopimelic acid to the nucleotide precursor UDP-N-acetylmuramoyl-L-alanyl-D-glutamate (UMAG) in the biosynthesis of bacterial cell-wall peptidoglycan. This Wolinella succinogenes (strain ATCC 29543 / DSM 1740 / CCUG 13145 / JCM 31913 / LMG 7466 / NCTC 11488 / FDC 602W) (Vibrio succinogenes) protein is UDP-N-acetylmuramoyl-L-alanyl-D-glutamate--2,6-diaminopimelate ligase.